The sequence spans 335 residues: MNFKKLPKIELHCHLDGSLRVDTILDIAKKDNIPLPSYNKKELINYVSIMDDCNSLDEYLNKFFIPNKVMQTKENLKRIAFELLEDVAADNVKYIEVRFAPLLHVEKGLNIEEIIESVLEGIKEAEKLYDIKGNLILGCMRNMDIPSAFEVVKKGAKFIGKGVVAIDLCAGEEPHFPGKYIEVLKLAKEYGYRITIHAGEAGVGENVLEAINLLNAERIGHGIYIKDCAEAYKLVKEKNIPLEMCPTSNLHTKASESYEAHPFMDFLKDGIKVTINTDNMTVSNTTITKELEMLNKFCGLSIEDYKILYLNAVEASFASSETKEVLKSYVKEITA.

Residues His-12 and His-14 each contribute to the Zn(2+) site. Substrate-binding residues include His-14 and Asp-16. His-197 is a binding site for Zn(2+). The active-site Proton donor is the Glu-200. Position 278 (Asp-278) interacts with Zn(2+).

Belongs to the metallo-dependent hydrolases superfamily. Adenosine and AMP deaminases family. Adenosine deaminase subfamily. The cofactor is Zn(2+).

The enzyme catalyses adenosine + H2O + H(+) = inosine + NH4(+). It carries out the reaction 2'-deoxyadenosine + H2O + H(+) = 2'-deoxyinosine + NH4(+). Catalyzes the hydrolytic deamination of adenosine and 2-deoxyadenosine. In Clostridium botulinum (strain Okra / Type B1), this protein is Adenosine deaminase.